Reading from the N-terminus, the 162-residue chain is Probable chemoreceptor glutamine deamidase CheD (162 aa).

The protein belongs to the CheD family.

It carries out the reaction L-glutaminyl-[protein] + H2O = L-glutamyl-[protein] + NH4(+). Probably deamidates glutamine residues to glutamate on methyl-accepting chemotaxis receptors (MCPs), playing an important role in chemotaxis. The sequence is that of Probable chemoreceptor glutamine deamidase CheD from Clostridium botulinum (strain ATCC 19397 / Type A).